The primary structure comprises 1535 residues: Putative protein TIC 214 C-terminal part (1535 aa).

Disordered stretches follow at residues 264–283, 312–333, and 1263–1282; these read ENQK…NSND, EQQE…SRKA, and DYKE…KNNK.

It belongs to the TIC214 family. Part of the Tic complex.

Its subcellular location is the plastid. The protein resides in the chloroplast. Functionally, involved in protein precursor import into chloroplasts. May be part of an intermediate translocation complex acting as a protein-conducting channel at the inner envelope. The sequence is that of Putative protein TIC 214 C-terminal part from Piper cenocladum (Ant piper).